The following is a 94-amino-acid chain: uncharacterized protein (94 aa).

Could be a silencing control element for the regulation of the restriction system. This is an uncharacterized protein from Herpetosiphon aurantiacus (Herpetosiphon giganteus).